The sequence spans 116 residues: MNLIMTILTITVALSLILATVSFWLPQMNPDAEKLSPYECGFDPLGSARLPFSLRFFLVAILFLLFDLEIALLLPLPWGDQLHNPTGTFFWATTVLILLTLGLIYEWTQGGLEWAE.

A run of 3 helical transmembrane segments spans residues 3–23 (LIMT…TVSF), 56–76 (FFLV…LLPL), and 87–107 (GTFF…IYEW).

Belongs to the complex I subunit 3 family.

It is found in the mitochondrion membrane. The catalysed reaction is a ubiquinone + NADH + 5 H(+)(in) = a ubiquinol + NAD(+) + 4 H(+)(out). In terms of biological role, core subunit of the mitochondrial membrane respiratory chain NADH dehydrogenase (Complex I) that is believed to belong to the minimal assembly required for catalysis. Complex I functions in the transfer of electrons from NADH to the respiratory chain. The immediate electron acceptor for the enzyme is believed to be ubiquinone. This chain is NADH-ubiquinone oxidoreductase chain 3 (MT-ND3), found in Cyprinus carpio (Common carp).